The following is a 98-amino-acid chain: NADH-ubiquinone oxidoreductase chain 4L (98 aa).

The next 3 membrane-spanning stretches (helical) occupy residues 1–21, 29–49, and 61–81; these read MTMV…GLLM, SLLC…VTIL, and IILL…LVMV.

It belongs to the complex I subunit 4L family. In terms of assembly, core subunit of respiratory chain NADH dehydrogenase (Complex I) which is composed of 45 different subunits.

The protein localises to the mitochondrion inner membrane. The catalysed reaction is a ubiquinone + NADH + 5 H(+)(in) = a ubiquinol + NAD(+) + 4 H(+)(out). In terms of biological role, core subunit of the mitochondrial membrane respiratory chain NADH dehydrogenase (Complex I) which catalyzes electron transfer from NADH through the respiratory chain, using ubiquinone as an electron acceptor. Part of the enzyme membrane arm which is embedded in the lipid bilayer and involved in proton translocation. The chain is NADH-ubiquinone oxidoreductase chain 4L (MT-ND4L) from Neomonachus schauinslandi (Hawaiian monk seal).